Reading from the N-terminus, the 164-residue chain is FMN reductase (NADH) RutF (164 aa).

It belongs to the non-flavoprotein flavin reductase family. RutF subfamily.

It carries out the reaction FMNH2 + NAD(+) = FMN + NADH + 2 H(+). In terms of biological role, catalyzes the reduction of FMN to FMNH2 which is used to reduce pyrimidine by RutA via the Rut pathway. The sequence is that of FMN reductase (NADH) RutF from Escherichia coli O45:K1 (strain S88 / ExPEC).